We begin with the raw amino-acid sequence, 397 residues long: Tryptophan synthase beta chain (397 aa).

Position 91 is an N6-(pyridoxal phosphate)lysine (K91).

The protein belongs to the TrpB family. In terms of assembly, tetramer of two alpha and two beta chains. Pyridoxal 5'-phosphate is required as a cofactor.

The catalysed reaction is (1S,2R)-1-C-(indol-3-yl)glycerol 3-phosphate + L-serine = D-glyceraldehyde 3-phosphate + L-tryptophan + H2O. It participates in amino-acid biosynthesis; L-tryptophan biosynthesis; L-tryptophan from chorismate: step 5/5. The beta subunit is responsible for the synthesis of L-tryptophan from indole and L-serine. This Bacillus anthracis (strain A0248) protein is Tryptophan synthase beta chain.